The chain runs to 600 residues: Aspartate--tRNA(Asp/Asn) ligase (600 aa).

E174 serves as a coordination point for L-aspartate. Residues 198 to 201 (QLFK) are aspartate. Residue R220 coordinates L-aspartate. ATP-binding positions include 220-222 (RDE) and Q229. H457 lines the L-aspartate pocket. Residue E491 participates in ATP binding. R498 is an L-aspartate binding site. 543-546 (GLDR) is a binding site for ATP.

This sequence belongs to the class-II aminoacyl-tRNA synthetase family. Type 1 subfamily. In terms of assembly, homodimer.

It is found in the cytoplasm. The catalysed reaction is tRNA(Asx) + L-aspartate + ATP = L-aspartyl-tRNA(Asx) + AMP + diphosphate. Aspartyl-tRNA synthetase with relaxed tRNA specificity since it is able to aspartylate not only its cognate tRNA(Asp) but also tRNA(Asn). Reaction proceeds in two steps: L-aspartate is first activated by ATP to form Asp-AMP and then transferred to the acceptor end of tRNA(Asp/Asn). The protein is Aspartate--tRNA(Asp/Asn) ligase of Burkholderia cenocepacia (strain ATCC BAA-245 / DSM 16553 / LMG 16656 / NCTC 13227 / J2315 / CF5610) (Burkholderia cepacia (strain J2315)).